The sequence spans 89 residues: Small ribosomal subunit protein uS15 (89 aa).

This sequence belongs to the universal ribosomal protein uS15 family. In terms of assembly, part of the 30S ribosomal subunit. Forms a bridge to the 50S subunit in the 70S ribosome, contacting the 23S rRNA.

Its function is as follows. One of the primary rRNA binding proteins, it binds directly to 16S rRNA where it helps nucleate assembly of the platform of the 30S subunit by binding and bridging several RNA helices of the 16S rRNA. Functionally, forms an intersubunit bridge (bridge B4) with the 23S rRNA of the 50S subunit in the ribosome. The polypeptide is Small ribosomal subunit protein uS15 (Pseudoalteromonas atlantica (strain T6c / ATCC BAA-1087)).